The following is a 662-amino-acid chain: Transketolase (662 aa).

A substrate-binding site is contributed by H28. Thiamine diphosphate-binding positions include H68 and 115 to 117 (GPL). D156 contacts Mg(2+). Thiamine diphosphate-binding residues include G157 and N186. Mg(2+)-binding residues include N186 and I188. Residues H261, R356, and S383 each coordinate substrate. H261 provides a ligand contact to thiamine diphosphate. Residue E410 is the Proton donor of the active site. Residue F436 coordinates thiamine diphosphate. Residues H460, D468, and R519 each coordinate substrate.

This sequence belongs to the transketolase family. In terms of assembly, homodimer. Mg(2+) serves as cofactor. The cofactor is Ca(2+). Mn(2+) is required as a cofactor. Requires Co(2+) as cofactor. It depends on thiamine diphosphate as a cofactor.

The enzyme catalyses D-sedoheptulose 7-phosphate + D-glyceraldehyde 3-phosphate = aldehydo-D-ribose 5-phosphate + D-xylulose 5-phosphate. It participates in carbohydrate biosynthesis; Calvin cycle. Its pathway is carbohydrate degradation; pentose phosphate pathway. Functionally, catalyzes the transfer of a two-carbon ketol group from a ketose donor to an aldose acceptor, via a covalent intermediate with the cofactor thiamine pyrophosphate. The protein is Transketolase (tkt) of Staphylococcus epidermidis (strain ATCC 12228 / FDA PCI 1200).